The following is a 126-amino-acid chain: Aspartate 1-decarboxylase (126 aa).

S25 functions as the Schiff-base intermediate with substrate; via pyruvic acid in the catalytic mechanism. At S25 the chain carries Pyruvic acid (Ser). Residue T57 coordinates substrate. The active-site Proton donor is Y58. A substrate-binding site is contributed by 73-75 (GAA).

The protein belongs to the PanD family. As to quaternary structure, heterooctamer of four alpha and four beta subunits. Pyruvate serves as cofactor. In terms of processing, is synthesized initially as an inactive proenzyme, which is activated by self-cleavage at a specific serine bond to produce a beta-subunit with a hydroxyl group at its C-terminus and an alpha-subunit with a pyruvoyl group at its N-terminus.

It is found in the cytoplasm. The enzyme catalyses L-aspartate + H(+) = beta-alanine + CO2. It functions in the pathway cofactor biosynthesis; (R)-pantothenate biosynthesis; beta-alanine from L-aspartate: step 1/1. Its function is as follows. Catalyzes the pyruvoyl-dependent decarboxylation of aspartate to produce beta-alanine. The protein is Aspartate 1-decarboxylase of Halorhodospira halophila (strain DSM 244 / SL1) (Ectothiorhodospira halophila (strain DSM 244 / SL1)).